The following is a 100-amino-acid chain: Urease subunit gamma (100 aa).

This sequence belongs to the urease gamma subunit family. Heterotrimer of UreA (gamma), UreB (beta) and UreC (alpha) subunits. Three heterotrimers associate to form the active enzyme.

It is found in the cytoplasm. The enzyme catalyses urea + 2 H2O + H(+) = hydrogencarbonate + 2 NH4(+). It functions in the pathway nitrogen metabolism; urea degradation; CO(2) and NH(3) from urea (urease route): step 1/1. This chain is Urease subunit gamma, found in Tolumonas auensis (strain DSM 9187 / NBRC 110442 / TA 4).